Reading from the N-terminus, the 501-residue chain is Glycosyltransferase family 92 protein F13G3.3 (501 aa).

The helical transmembrane segment at Leu10–Ile30 threads the bilayer. In terms of domain architecture, GT92 spans Lys151–Tyr439.

This sequence belongs to the glycosyltransferase 92 family.

The protein resides in the membrane. The chain is Glycosyltransferase family 92 protein F13G3.3 from Caenorhabditis elegans.